Consider the following 387-residue polypeptide: MADPKFQYLPYIAHDQPDVYETPDVNEAETSDYDEDEPVNDAIERLHISTKDSIGKFRGKYLTGEVDFSDGIGRKNRLGYDARSLDYELAGEGERETPLQRCHRLKCEMNELMEEIEASRADTGRTAEEKASHETVFGVVSTAKKVLESLKLEQVIGSEVVAGGAGGGDAEAKKLIAQIEEYRKTGAVSSSDPKVVANELVQSARVAQLEHRLHQLEVAVGAKPERISRLAGTTGTGNLIEAVQNISAKAALLQPSQLDTIEQRLNNLLQQMNSIQEKSNATGQDPNREQKILELYEIAKSTEPIVQVLPDILNRMLTLESLHKYATNFSKLFAELETTQASILNGVAANKTLLTGVQEAFAQNLENVNKEVKKLEERMTKLQQMIK.

3 coiled-coil regions span residues 99-125, 256-282, and 355-387; these read LQRC…DTGR, SQLD…SNAT, and TGVQ…QMIK.

It belongs to the dynactin subunit 2 family. In terms of assembly, subunit of dynactin, a multiprotein complex associated with dynein.

The protein localises to the cytoplasm. It localises to the cytoskeleton. It is found in the membrane. Functionally, modulates cytoplasmic dynein binding to an organelle, and plays a role in prometaphase chromosome alignment and spindle organization during mitosis. This chain is Dynactin subunit 2, found in Anopheles gambiae (African malaria mosquito).